The following is a 331-amino-acid chain: Probable inactive O-methyltransferase 11 (331 aa).

Residues Gly179, Asp202, 224–226 (GDF), Asp225, Phe226, and Lys239 each bind S-adenosyl-L-methionine.

It belongs to the class I-like SAM-binding methyltransferase superfamily. Cation-independent O-methyltransferase family. COMT subfamily.

This Dictyostelium discoideum (Social amoeba) protein is Probable inactive O-methyltransferase 11 (omt11).